We begin with the raw amino-acid sequence, 636 residues long: Nitrous-oxide reductase (636 aa).

Positions Met-1–Ala-49 form a signal peptide, tat-type signal. The Cu cation site is built by His-127, His-128, and His-176. Ca(2+) contacts are provided by Tyr-254, Glu-257, Met-265, and Asp-271. Over residues Asp-302–Pro-312 the composition is skewed to basic and acidic residues. The disordered stretch occupies residues Asp-302 to Asn-322. Residue Asn-322 participates in Ca(2+) binding. Cu cation-binding residues include His-324, His-380, and His-431. Residues Lys-452 and Glu-467 each coordinate Ca(2+). The Cu cation site is built by His-492, His-581, Cys-616, Trp-618, Cys-620, His-624, and Met-627. A COX2-like region spans residues Asn-540–Ala-636.

It belongs to the NosZ family. This sequence in the C-terminal section; belongs to the cytochrome c oxidase subunit 2 family. As to quaternary structure, homodimer. It depends on Ca(2+) as a cofactor. Cu cation is required as a cofactor. Predicted to be exported by the Tat system. The position of the signal peptide cleavage has not been experimentally proven.

It localises to the periplasm. It carries out the reaction N2 + 2 Fe(III)-[cytochrome c] + H2O = nitrous oxide + 2 Fe(II)-[cytochrome c] + 2 H(+). The protein operates within nitrogen metabolism; nitrate reduction (denitrification); dinitrogen from nitrate: step 4/4. Its function is as follows. Nitrous-oxide reductase is part of a bacterial respiratory system which is activated under anaerobic conditions in the presence of nitrate or nitrous oxide. In Pseudomonas aeruginosa (strain ATCC 15692 / DSM 22644 / CIP 104116 / JCM 14847 / LMG 12228 / 1C / PRS 101 / PAO1), this protein is Nitrous-oxide reductase (nosZ).